A 121-amino-acid chain; its full sequence is Conopressin-conophysin (121 aa).

The signal sequence occupies residues 1 to 20; the sequence is MGRLTMALCWLLLLLLTTQA. Residues Cys-21 and Cys-26 are joined by a disulfide bond. 4-hydroxyproline; partial; in Conopressin-ba1c is present on Pro-27. Gly-29 bears the Glycine amide mark. 7 disulfides stabilise this stretch: Cys-43/Cys-83, Cys-46/Cys-57, Cys-51/Cys-73, Cys-58/Cys-63, Cys-90/Cys-108, Cys-102/Cys-120, and Cys-109/Cys-114.

The protein belongs to the vasopressin/oxytocin family. As to expression, expressed by the venom duct.

It is found in the secreted. The polypeptide is Conopressin-conophysin (Conus bayani (Bayan's cone)).